Here is a 161-residue protein sequence, read N- to C-terminus: Effector CFEM5 (161 aa).

The first 23 residues, 1 to 23 (MFSLTKSVLFTSIVAIAAQATTA), serve as a signal peptide directing secretion. Residues 24-126 (VSSPTQTSLP…KVLDAVVASA (103 aa)) enclose the CFEM domain. 3 cysteine pairs are disulfide-bonded: C46/C78, C56/C63, and C65/C100. A heme-binding site is contributed by D60.

This sequence belongs to the RBT5 family. In terms of assembly, interacts with Z.mays LRR5; the interaction is direct. Interacts with Z.mays WAK17 isoform 2; the interaction is direct.

The protein resides in the membrane. Its subcellular location is the secreted. Suppresses host programmed cell death during infection by binding to Z.mays WAK17 isoform 2 and Z.mays LRR5, to prevent activation of Z.mays WAK17 isoform 1 and the downstream hypersensitive response. The protein is Effector CFEM5 of Gibberella zeae (strain ATCC MYA-4620 / CBS 123657 / FGSC 9075 / NRRL 31084 / PH-1) (Wheat head blight fungus).